The sequence spans 137 residues: Small ribosomal subunit protein bS18c (137 aa).

It belongs to the bacterial ribosomal protein bS18 family. As to quaternary structure, part of the 30S ribosomal subunit.

The protein resides in the plastid. The protein localises to the chloroplast. The chain is Small ribosomal subunit protein bS18c (rps18) from Chlamydomonas reinhardtii (Chlamydomonas smithii).